The following is a 344-amino-acid chain: Nicotinate-nucleotide--dimethylbenzimidazole phosphoribosyltransferase (344 aa).

The active-site Proton acceptor is the Glu310.

The protein belongs to the CobT family.

The catalysed reaction is 5,6-dimethylbenzimidazole + nicotinate beta-D-ribonucleotide = alpha-ribazole 5'-phosphate + nicotinate + H(+). It functions in the pathway nucleoside biosynthesis; alpha-ribazole biosynthesis; alpha-ribazole from 5,6-dimethylbenzimidazole: step 1/2. Its function is as follows. Catalyzes the synthesis of alpha-ribazole-5'-phosphate from nicotinate mononucleotide (NAMN) and 5,6-dimethylbenzimidazole (DMB). This chain is Nicotinate-nucleotide--dimethylbenzimidazole phosphoribosyltransferase, found in Shewanella amazonensis (strain ATCC BAA-1098 / SB2B).